A 2324-amino-acid chain; its full sequence is Acetyl-CoA carboxylase (2324 aa).

Methionine 1 bears the N-acetylmethionine mark. Residues 1-34 (MEESSQPAKPLEMNPHSRFIIGSVSEDNSEDETS) form a disordered region. Residues serine 78 and serine 80 each carry the phosphoserine modification. Positions 117–618 (VIEKVLIANN…DTGWLDRLIA (502 aa)) constitute a Biotin carboxylation domain. One can recognise an ATP-grasp domain in the interval 275–466 (QKRILNVPQE…LPAAQLQIAM (192 aa)). 315–320 (GGGGKG) is an ATP binding site. Mn(2+) contacts are provided by glutamate 424, glutamate 437, and asparagine 439. Residue arginine 441 is part of the active site. In terms of domain architecture, Biotinyl-binding spans 745–819 (FEKENDPSIL…DPGCVIAKLQ (75 aa)). The residue at position 786 (lysine 786) is an N6-biotinyllysine. Position 1193 is a phosphoserine (serine 1193). The 339-residue stretch at 1553–1891 (PYVTKDLLQS…SVYSPVPILK (339 aa)) folds into the CoA carboxyltransferase N-terminal domain. Residues 1553 to 2211 (PYVTKDLLQS…EDVVKKKIHD (659 aa)) form a carboxyltransferase region. CoA is bound by residues arginine 1800, lysine 2104, and arginine 2106. A CoA carboxyltransferase C-terminal domain is found at 1895 to 2211 (PIDRTIDFVP…EDVVKKKIHD (317 aa)).

Requires biotin as cofactor. The cofactor is Mn(2+).

The protein resides in the cytoplasm. The catalysed reaction is hydrogencarbonate + acetyl-CoA + ATP = malonyl-CoA + ADP + phosphate + H(+). It carries out the reaction N(6)-biotinyl-L-lysyl-[protein] + hydrogencarbonate + ATP = N(6)-carboxybiotinyl-L-lysyl-[protein] + ADP + phosphate + H(+). It participates in lipid metabolism; malonyl-CoA biosynthesis; malonyl-CoA from acetyl-CoA: step 1/1. By phosphorylation. Functionally, catalyzes the rate-limiting reaction in the biogenesis of long-chain fatty acids. Carries out three functions: biotin carboxyl carrier protein, biotin carboxylase and carboxyltransferase. The polypeptide is Acetyl-CoA carboxylase (ACAC) (Gallus gallus (Chicken)).